A 435-amino-acid polypeptide reads, in one-letter code: CUB and peptidase domain-containing protein 1 (435 aa).

The signal sequence occupies residues 1–16 (SGFHLSFSFFRRAVCG). In terms of domain architecture, Peptidase S1 spans 25–261 (IVGGTVAPIN…LKSWITGKIS (237 aa)). Cysteine 50 and cysteine 66 are oxidised to a cystine. Residues histidine 65 and aspartate 116 each act as charge relay system in the active site. Disulfide bonds link cysteine 151–cysteine 218, cysteine 182–cysteine 197, cysteine 208–cysteine 237, and cysteine 322–cysteine 341. The Charge relay system role is filled by serine 212. The 123-residue stretch at 256–378 (ITGKISRSPA…SGFHLSFSFF (123 aa)) folds into the CUB domain.

It belongs to the peptidase S1 family. Component of the acid-insoluble organic matrix of the aragonitic skeleton (at protein level).

Its subcellular location is the secreted. In Acropora millepora (Staghorn coral), this protein is CUB and peptidase domain-containing protein 1.